The following is a 515-amino-acid chain: Maturase K (515 aa).

It belongs to the intron maturase 2 family. MatK subfamily.

The protein resides in the plastid. Its subcellular location is the chloroplast. Functionally, usually encoded in the trnK tRNA gene intron. Probably assists in splicing its own and other chloroplast group II introns. The chain is Maturase K from Ceratophyllum demersum (Rigid hornwort).